A 1403-amino-acid polypeptide reads, in one-letter code: Envelopment polyprotein (1403 aa).

The N-terminal stretch at 1–17 (MLLNIVLISNLACLAFA) is a signal peptide. Residues 18–209 (LPLKEGTRGS…ELMIESFCTN (192 aa)) lie on the Lumenal side of the membrane. Asparagine 40 carries N-linked (GlcNAc...) asparagine; by host glycosylation. Residues 210-230 (LELILLVTFILVGSVMMMILT) form a helical membrane-spanning segment. Topologically, residues 231-314 (KTYIVYVFIP…PKTRKLCKSK (84 aa)) are cytoplasmic. The helical transmembrane segment at 315-335 (ISNIVLCVITSLIFFSFITPI) threads the bilayer. Over 336–361 (SSQCIDIEKLPDEYITCKRELANIKS) the chain is Lumenal. The chain crosses the membrane as a helical span at residues 362 to 382 (LTIDDTYSFIYSCTCIIVLIL). The Cytoplasmic segment spans residues 383 to 448 (LKKAAKYILY…FKFESSYNRT (66 aa)). A helical membrane pass occupies residues 449-469 (GLIIFMLLLVPTIVMTQETSI). Topologically, residues 470–1361 (NCKNIQSTQL…GNLSFYWRLT (892 aa)) are lumenal. Cysteine 471 and cysteine 487 form a disulfide bridge. N-linked (GlcNAc...) asparagine; by host glycosylation occurs at asparagine 493. Disulfide bonds link cysteine 523–cysteine 550, cysteine 580–cysteine 589, and cysteine 591–cysteine 598. Residues asparagine 686 and asparagine 1353 are each glycosylated (N-linked (GlcNAc...) asparagine; by host). The chain crosses the membrane as a helical span at residues 1362–1382 (IYIIISLIMLILFLYILIPLC). Residues 1383 to 1403 (KRLKGLLEYNERIYQMENKFK) are Cytoplasmic-facing.

It belongs to the nairovirus envelope glycoprotein family. As to quaternary structure, heterodimer with glycoprotein C; in prefusion state. Heterodimer with glycoprotein N; in prefusion state. Homotrimeric; in postfusion state. In terms of processing, specific enzymatic cleavage by host MBTPS1/S1P/SKI-1 endopeptidase yield glycoprotein N. Specific enzymatic cleavages by host furin-like protease and MBTPS1/S1P endopeptidase yield GP38. Post-translationally, glycosylated.

The protein localises to the host endoplasmic reticulum membrane. It localises to the virion membrane. Its subcellular location is the host Golgi apparatus membrane. Its function is as follows. Glycoprotein C and glycoprotein N interact with each other and are present at the surface of the virion. Glycoprotein N probably locks the Gn-Gc complex in a prefusion state. Glycoprotein N and glycoprotein C are able to attach the virion to host cell receptors. This attachment induces virion internalization predominantly through clathrin-dependent endocytosis. In terms of biological role, glycoprotein C and glycoprotein N interact with each other and are present at the surface of the virion. The spikes at the surface of the virion are formed by an N-terminal extension of glycoprotein C. Glycoprotein N and glycoprotein C are able to attach the virion to host cell receptors. This attachment induces virion internalization predominantly through clathrin-dependent endocytosis. Class II fusion protein that promotes fusion of viral membrane with host endosomal membrane after endocytosis of the virion. Exposure to potassium is necessary for the conformational change leading to fusion. This is Envelopment polyprotein (GP) from Bos taurus (Bovine).